The primary structure comprises 108 residues: Synaptobrevin-1 (108 aa).

A disordered region spans residues 1-25; the sequence is MDAQGDAGAQGGSQGPRPSNKRLQQ. Topologically, residues 1-85 are cytoplasmic; sequence MDAQGDAGAQ…KRKYWWKNIK (85 aa). Residues 22–82 enclose the v-SNARE coiled-coil homology domain; sequence RLQQTQAQVD…ATLKRKYWWK (61 aa). The chain crosses the membrane as a helical; Anchor for type IV membrane protein span at residues 86–106; that stretch reads MMIIMCAIVVILIIIIVLWAG. The Extracellular segment spans residues 107–108; that stretch reads GK.

The protein belongs to the synaptobrevin family. In terms of assembly, part of the SNARE core complex containing CBG09569/SNAP25, snb-1/VAMP2 and CBG03570/STX1A. This complex binds to cpx-1/CPLX1.

It localises to the cytoplasmic vesicle. It is found in the secretory vesicle. The protein resides in the synaptic vesicle membrane. The protein localises to the cell membrane. Its subcellular location is the synapse. It localises to the synaptosome. In terms of biological role, involved in the targeting and/or fusion of transport vesicles to their target membrane. Acts in neuronal exocytosis of synaptic transmission. Likely to have a role in cholinergic transmisson. Required for viability, coordinated movement and M3 pharynx motor neuron function. This Caenorhabditis briggsae protein is Synaptobrevin-1.